The chain runs to 647 residues: Microtubule-associated protein 9 (647 aa).

S2 carries the N-acetylserine modification. Y12 bears the Phosphotyrosine mark. Disordered stretches follow at residues 127–323 (KSFS…ELIM), 344–421 (SATA…PDRA), 491–514 (KRLE…EALQ), 530–553 (KNRK…AEKK), 580–600 (NEKR…KQAI), and 613–647 (QERI…AKVF). Residues 133–145 (QNKDEEFEKDKIK) are compositionally biased toward basic and acidic residues. Positions 155–166 (IKSTSSAENNSL) are enriched in polar residues. Residues 174–186 (PSPRPRSMLKKKS) are compositionally biased toward basic residues. A coiled-coil region spans residues 184 to 210 (KKSHMEEKDGLEDKETALSEELELHSA). The span at 187-200 (HMEEKDGLEDKETA) shows a compositional bias: basic and acidic residues. 2 stretches are compositionally biased toward polar residues: residues 210–219 (APSSLPTPNG) and 239–249 (CLTSLASSSLK). Residues 268 to 287 (DPNEEITENHNSLKSDENKE) are compositionally biased toward basic and acidic residues. Residues 298–328 (AVEKSKESQVTADDLEEEKAKAELIMDDDRT) are a coiled coil. Residues 365-374 (NNRASSASAR) show a composition bias toward low complexity. A coiled-coil region spans residues 443-628 (MHRIKRIESE…KQKKRHSFLE (186 aa)).

In terms of assembly, binds to purified microtubules via its C-terminus.

It localises to the cytoplasm. The protein resides in the cytoskeleton. The protein localises to the spindle. In terms of biological role, involved in organization of the bipolar mitotic spindle. Required for bipolar spindle assembly, mitosis progression and cytokinesis. May act by stabilizing interphase microtubules. The sequence is that of Microtubule-associated protein 9 (MAP9) from Homo sapiens (Human).